The primary structure comprises 511 residues: uncharacterized protein (511 aa).

A run of 3 helical transmembrane segments spans residues 33 to 53, 59 to 79, and 97 to 117; these read IICMIIAYVFILPAGIVLAMA, IPVQIVYVILTLIGYIFAHIS, and VGRFFMWITFLIAIVGITTSI. Residues Ser147, Ser161, and Ser162 each carry the phosphoserine modification. Residues 157–180 form a disordered region; the sequence is REGNSSDEYLPPQSSRRDVSSEKP. Transmembrane regions (helical) follow at residues 216 to 236, 249 to 269, 297 to 317, 332 to 352, 412 to 432, 449 to 469, and 483 to 503; these read LWLYVGFFESCTGIVLLAGIF, IKGAIFLWYGILSFGEYLGAF, MVESFLLFAYGVSNVWLEHLG, SLAFMLWWAGLCGILVESKVV, VLWGRLLAAAAIARICTYIML, IITSFCLICGGAMFMASSYDV, and IMNISVAFTCIVMGLEVMFLI.

This sequence to yeast YCR061W.

It is found in the endoplasmic reticulum membrane. This is an uncharacterized protein from Schizosaccharomyces pombe (strain 972 / ATCC 24843) (Fission yeast).